The sequence spans 311 residues: tRNA-cytidine(32) 2-sulfurtransferase (311 aa).

A PP-loop motif motif is present at residues 47–52 (SGGKDS). Residues Cys122, Cys125, and Cys213 each contribute to the [4Fe-4S] cluster site.

Belongs to the TtcA family. In terms of assembly, homodimer. The cofactor is Mg(2+). It depends on [4Fe-4S] cluster as a cofactor.

Its subcellular location is the cytoplasm. It carries out the reaction cytidine(32) in tRNA + S-sulfanyl-L-cysteinyl-[cysteine desulfurase] + AH2 + ATP = 2-thiocytidine(32) in tRNA + L-cysteinyl-[cysteine desulfurase] + A + AMP + diphosphate + H(+). Its pathway is tRNA modification. In terms of biological role, catalyzes the ATP-dependent 2-thiolation of cytidine in position 32 of tRNA, to form 2-thiocytidine (s(2)C32). The sulfur atoms are provided by the cysteine/cysteine desulfurase (IscS) system. The chain is tRNA-cytidine(32) 2-sulfurtransferase from Salmonella typhimurium (strain LT2 / SGSC1412 / ATCC 700720).